The primary structure comprises 297 residues: Large ribosomal subunit protein uL18 (297 aa).

N-acetylglycine is present on Gly-2. N6-acetyllysine is present on residues Lys-5 and Lys-48. Ser-185 is subject to Phosphoserine. Lys-220 is subject to N6-acetyllysine; alternate. Lys-220 participates in a covalent cross-link: Glycyl lysine isopeptide (Lys-Gly) (interchain with G-Cter in SUMO1); alternate. Lys-220 participates in a covalent cross-link: Glycyl lysine isopeptide (Lys-Gly) (interchain with G-Cter in SUMO2); alternate. Thr-232 carries the phosphothreonine modification. The segment at 253–297 is disordered; the sequence is YEKKPKKEVKKKRWNRPKMSLAQKKDRVAQKKASFLRAQERAAES. Residues 258–268 show a composition bias toward basic residues; that stretch reads KKEVKKKRWNR. A Phosphoserine modification is found at Ser-272.

This sequence belongs to the universal ribosomal protein uL18 family. Component of the large ribosomal subunit (LSU). Part of the 5S RNP complex, which is a LSU subcomplex composed of the 5S RNA, RPL5 and RPL11. Component of a hexameric 5S RNP precursor complex, composed of 5S RNA, RRS1, RPF2/BXDC1, RPL5, RPL11 and HEATR3; this complex acts as a precursor for ribosome assembly. Interacts with isoform 1 of NVL in an ATP-dependent manner. Interacts with RRP1B. Interacts with IPO5, IPO7 and KPNB1; these interactions may be involved in RPL5 nuclear import for the assembly of ribosomal subunits.

The protein localises to the cytoplasm. The protein resides in the nucleus. It localises to the nucleolus. Functionally, component of the ribosome, a large ribonucleoprotein complex responsible for the synthesis of proteins in the cell. The small ribosomal subunit (SSU) binds messenger RNAs (mRNAs) and translates the encoded message by selecting cognate aminoacyl-transfer RNA (tRNA) molecules. The large subunit (LSU) contains the ribosomal catalytic site termed the peptidyl transferase center (PTC), which catalyzes the formation of peptide bonds, thereby polymerizing the amino acids delivered by tRNAs into a polypeptide chain. The nascent polypeptides leave the ribosome through a tunnel in the LSU and interact with protein factors that function in enzymatic processing, targeting, and the membrane insertion of nascent chains at the exit of the ribosomal tunnel. As part of the 5S RNP/5S ribonucleoprotein particle it is an essential component of the LSU, required for its formation and the maturation of rRNAs. It also couples ribosome biogenesis to p53/TP53 activation. As part of the 5S RNP it accumulates in the nucleoplasm and inhibits MDM2, when ribosome biogenesis is perturbed, mediating the stabilization and the activation of TP53. This is Large ribosomal subunit protein uL18 (RPL5) from Homo sapiens (Human).